The following is a 117-amino-acid chain: UPF0102 protein RSKD131_0118 (117 aa).

It belongs to the UPF0102 family.

This is UPF0102 protein RSKD131_0118 from Cereibacter sphaeroides (strain KD131 / KCTC 12085) (Rhodobacter sphaeroides).